An 877-amino-acid chain; its full sequence is Hopanoid transporter HpnN (877 aa).

Residues 1 to 16 (MVTSLIVRLVAWSVRR) are Cytoplasmic-facing. The helical transmembrane segment at 17–37 (PVWVVVLSLLIAAFSGVYVAR) threads the bilayer. Residues 38–279 (HFKINTDISK…FSSVEDGAAL (242 aa)) are Periplasmic-facing. A helical membrane pass occupies residues 280 to 295 (NGVVTLLVVFVILWLA). Topologically, residues 296–299 (LRSK) are cytoplasmic. A helical transmembrane segment spans residues 300-323 (RMIASVLVTLFVGLVVTAALGLAM). The SSD domain maps to 302–428 (IASVLVTLFV…LTLLPALLRL (127 aa)). Residues 324-332 (VGSLNMISV) lie on the Periplasmic side of the membrane. Residues 333–351 (AFMVLFVGLGVDFSIQYGV) form a helical membrane-spanning segment. Topologically, residues 352 to 373 (KYREERFRDERIDHALIGAAHS) are cytoplasmic. A helical transmembrane segment spans residues 374-394 (MGMPLALATTAVAASFFSFIP). At 395–399 (TAYRG) the chain is on the periplasmic side. A helical membrane pass occupies residues 400–426 (VSELGLIAGVGMFVALLTTLTLLPALL). At 427–452 (RLFAPPGESKTPGFPWLAPVDDYLDR) the chain is on the cytoplasmic side. The chain crosses the membrane as a helical span at residues 453-472 (HRKPILIGTLAVVIGALPLL). The Periplasmic segment spans residues 473 to 718 (AFLHFDFNPL…ILHSANTIIS (246 aa)). The helical transmembrane segment at 719 to 739 (AFLHAALWSIISITILLWITL) threads the bilayer. Residues 740–743 (RRFG) are Cytoplasmic-facing. The chain crosses the membrane as a helical span at residues 744-766 (DVLRTLVPLLVSGIVTLEMCVVL). Over 767 to 774 (GMSLNFAN) the chain is Periplasmic. The helical transmembrane segment at 775 to 794 (IIALPLMLGVGVAFKVYFVM) threads the bilayer. At 795 to 809 (AWRAGQTGLLHSSLT) the chain is on the cytoplasmic side. Residues 810-827 (HAVLFSAATTATAFGSLW) traverse the membrane as a helical segment. Over 828-836 (LSHHPGTSS) the chain is Periplasmic. A helical membrane pass occupies residues 837–858 (MGKLLALALTCTLIGAVVFQPV). The Cytoplasmic segment spans residues 859–877 (LMGKPRVKRAKNQSQGINE).

The protein belongs to the resistance-nodulation-cell division (RND) (TC 2.A.6) family. MmpL subfamily. Homodimer.

The protein resides in the cell inner membrane. Functionally, essential for hopanoid transport from the cytoplasmic to the outer membrane. Is capable of shuttling hopanoid lipids from the inner membrane to the periplasm, where they probably spontaneously insert to the inner leaflet of the outer membrane, strengthening the cell envelope. May be a proton-motive-force (PMF)-dependent transporter. Is critical for multidrug resistance and cell wall remodeling in Burkholderia. This is Hopanoid transporter HpnN from Burkholderia multivorans (strain ATCC 17616 / 249).